A 271-amino-acid chain; its full sequence is Calretinin (271 aa).

EF-hand domains lie at 16–51 (LTASQFLEIWKHFDADGNGYIEGKELENFFQELEKA), 63–98 (NFGEKMKEFMQKYDKNSDGKIEMAELAQILPTEENF), 107–142 (GSSAEFMEAWRKYDTDRSGYIEANELKGFLSDLLKK), 151–186 (KLQEYTQTILRMFDLNGDGKLGLSEMSRLLPVQENF), 195–230 (LTSEEFNAIFTFYDKDGSGYIDENELDALLKDLYEK), and 235–270 (MNIQQLTTYRKSVMSLAEAGKLYRKDLEIVLCSEPP). Residues aspartate 29, aspartate 31, asparagine 33, tyrosine 35, glutamate 40, aspartate 76, asparagine 78, aspartate 80, lysine 82, glutamate 87, aspartate 120, aspartate 122, serine 124, tyrosine 126, glutamate 131, aspartate 164, asparagine 166, aspartate 168, lysine 170, glutamate 175, aspartate 208, aspartate 210, serine 212, tyrosine 214, and glutamate 219 each coordinate Ca(2+). The residue at position 214 (tyrosine 214) is a Phosphotyrosine.

Belongs to the calbindin family.

The protein resides in the synapse. It is found in the cell projection. The protein localises to the dendrite. Functionally, calcium-binding protein involved in calcium homeostasis and signal transduction. It plays a critical role in buffering intracellular calcium levels and modulating calcium-dependent signaling pathways. Predominantly expressed in specific neuronal populations, influences synaptic plasticity and neuronal excitability, contributing to learning and memory. During embryonic development, it facilitates neuronal differentiation and maturation. This Rattus norvegicus (Rat) protein is Calretinin (Calb2).